Here is a 295-residue protein sequence, read N- to C-terminus: sn-glycerol-3-phosphate transport system permease protein UgpA (295 aa).

Residues 1–11 lie on the Cytoplasmic side of the membrane; it reads MSSSRPVFRSR. The chain crosses the membrane as a helical span at residues 12-32; that stretch reads WLPYLLVAPQLIITVIFFIWP. Residues 33–80 are Periplasmic-facing; the sequence is AGEALWYSLQSVDPFGFSSRFVGLDNFVALFHDSYYIDSFWTTIKFST. An ABC transmembrane type-1 domain is found at 76 to 284; that stretch reads IKFSTFVTVS…FLVIVLTVMQ (209 aa). A helical transmembrane segment spans residues 81–101; that stretch reads FVTVSGLLVSLFFAALVEYIV. Residues 102–109 are Cytoplasmic-facing; the sequence is RGSRFYQT. Residues 110–130 traverse the membrane as a helical segment; sequence LMLLPYAVAPAVAAVLWIFLF. The Periplasmic segment spans residues 131–156; that stretch reads NPGRGLITHFLAEFGYDWNHAQNSGQ. A helical membrane pass occupies residues 157-177; the sequence is AMFLVVFASVWKQISYNFLFF. At 178 to 207 the chain is on the cytoplasmic side; sequence YAALQSIPRSLIEAAAIDGAGPIRRFFKIA. Residues 208–228 form a helical membrane-spanning segment; it reads LPLIAPVSFFLLVVNLVYAFF. Over 229-262 the chain is Periplasmic; the sequence is DTFPVIDAATSGGPVQATTTLIYKIYREGFTGLD. A helical membrane pass occupies residues 263 to 283; that stretch reads LASSAAQSVVLMFLVIVLTVM. Over 284 to 295 the chain is Cytoplasmic; it reads QFRYVESKVRYQ.

This sequence belongs to the binding-protein-dependent transport system permease family. UgpAE subfamily. The complex is composed of two ATP-binding proteins (UgpC), two transmembrane proteins (UgpA and UgpE) and a solute-binding protein (UgpB).

The protein localises to the cell inner membrane. Functionally, part of the ABC transporter complex UgpBAEC involved in sn-glycerol-3-phosphate (G3P) import. Probably responsible for the translocation of the substrate across the membrane. The chain is sn-glycerol-3-phosphate transport system permease protein UgpA (ugpA) from Escherichia coli O157:H7.